The primary structure comprises 388 residues: uncharacterized protein (388 aa).

The next 8 helical transmembrane spans lie at 15-37 (VISA…LLVL), 97-119 (GFSK…VVFY), 129-151 (PIWG…TFLL), 158-175 (FIYI…FLSA), 179-196 (MMLA…VLFK), 203-225 (LAFW…YLSQ), 304-326 (IFIV…YIYF), and 347-369 (LLSV…DALL).

Its subcellular location is the cell membrane. This is an uncharacterized protein from Aquifex aeolicus (strain VF5).